Consider the following 312-residue polypeptide: Small ribosomal subunit biogenesis GTPase RsgA (312 aa).

Residues 86 to 245 form the CP-type G domain; that stretch reads QSFLKRPAVA…LADTPGFNRP (160 aa). Residues 135 to 138 and 187 to 195 each bind GTP; these read TKID and GPSGVGKTS. Zn(2+)-binding residues include Cys-270, Cys-275, His-277, and Cys-283.

This sequence belongs to the TRAFAC class YlqF/YawG GTPase family. RsgA subfamily. In terms of assembly, monomer. Associates with 30S ribosomal subunit, binds 16S rRNA. It depends on Zn(2+) as a cofactor.

Its subcellular location is the cytoplasm. One of several proteins that assist in the late maturation steps of the functional core of the 30S ribosomal subunit. Helps release RbfA from mature subunits. May play a role in the assembly of ribosomal proteins into the subunit. Circularly permuted GTPase that catalyzes slow GTP hydrolysis, GTPase activity is stimulated by the 30S ribosomal subunit. The protein is Small ribosomal subunit biogenesis GTPase RsgA of Prochlorococcus marinus (strain NATL2A).